A 485-amino-acid polypeptide reads, in one-letter code: NADH-quinone oxidoreductase subunit N (485 aa).

The next 14 helical transmembrane spans lie at 8–28, 35–55, 71–91, 105–125, 127–147, 159–179, 203–223, 235–255, 271–291, 297–317, 326–346, 373–393, 408–430, and 455–475; these read LIALLPLLIVGLTVVVVMLSI, FLNATLSVIGLNAALVSLWFV, GFAMLYTGLVLLASLATCTFA, FYLLVLIASLGGILLANANHL, ALFLGIELISLPLFGLIGYAF, YTILSAAASSFLLFGMALVYA, LLAGFGLMIVGLGFKLSLVPF, PAPVSTFLATASKIAIFGVVM, VVLGIIAFASIIFGNLMALSQ, LLGYSSISHLGYLLVALIALQ, VGVYLAGYLFSSLGAFGVVSL, AAVMTVMMLSLAGIPMTLGFI, WWLVAAVVVGSAIGLYYYLRVAV, and IVVLISALLVLVLGVWPQPLI.

This sequence belongs to the complex I subunit 2 family. As to quaternary structure, NDH-1 is composed of 13 different subunits. Subunits NuoA, H, J, K, L, M, N constitute the membrane sector of the complex.

It is found in the cell inner membrane. The enzyme catalyses a quinone + NADH + 5 H(+)(in) = a quinol + NAD(+) + 4 H(+)(out). Its function is as follows. NDH-1 shuttles electrons from NADH, via FMN and iron-sulfur (Fe-S) centers, to quinones in the respiratory chain. The immediate electron acceptor for the enzyme in this species is believed to be ubiquinone. Couples the redox reaction to proton translocation (for every two electrons transferred, four hydrogen ions are translocated across the cytoplasmic membrane), and thus conserves the redox energy in a proton gradient. This chain is NADH-quinone oxidoreductase subunit N, found in Salmonella schwarzengrund (strain CVM19633).